The following is a 159-amino-acid chain: Ribosomal RNA large subunit methyltransferase H (159 aa).

S-adenosyl-L-methionine is bound by residues Leu-76, Gly-108, and Phe-127–Leu-132.

The protein belongs to the RNA methyltransferase RlmH family. As to quaternary structure, homodimer.

Its subcellular location is the cytoplasm. The catalysed reaction is pseudouridine(1915) in 23S rRNA + S-adenosyl-L-methionine = N(3)-methylpseudouridine(1915) in 23S rRNA + S-adenosyl-L-homocysteine + H(+). In terms of biological role, specifically methylates the pseudouridine at position 1915 (m3Psi1915) in 23S rRNA. The sequence is that of Ribosomal RNA large subunit methyltransferase H from Bacillus mycoides (strain KBAB4) (Bacillus weihenstephanensis).